The chain runs to 303 residues: MDLDQWISKVKDGQHLSEDELQLLCEYVKEILIEESNVQPVNSPVTVCGDIHGQFHDLMKLFQTGGHVPETNYIFMGDFVDRGYNSLEVFTILLLLKARHPANITLLRGNHESRQLTQVYGFYDECQRKYGNANAWRYCTDVFDYLTLSAIIDGTVLCVHGGLSPDVRTIDQIRLIERNCEIPHEGPFCDLMWSDPEDIETWAVSPRGAGWLFGSRVTTEFNHINNLDLVCRAHQLVQEGLKYMFQDKGLVTVWSAPNYCYRCGNVASILSFNDNMEREVKFFTETEENNQMRGPRTGVPYFL.

The Zn(2+) site is built by Asp50, His52, Asp78, and Asn110. His111 functions as the Proton donor in the catalytic mechanism. Zn(2+)-binding residues include His160 and His234.

It belongs to the PPP phosphatase family. PP-6 (PP-V) subfamily. In terms of assembly, interacts with PHYA and PHYB, mostly when they are phosphorylated and in Pfr forms. Interacts with TAP46. Interacts with PIN1 and PIN2. Interacts with ABI5. Interacts with PIF3 and PIF4. Protein phosphatase 6 (PP6) holoenzyme is a heterotrimeric complex formed by the catalytic subunit FYPP, a SAPS domain-containing subunit (SAL) and a protein phosphatase 2A regulatory subunit A (PP2AA). It depends on Zn(2+) as a cofactor. As to expression, mostly expressed in flowers. Also detected to a lower extent in stems and leaves. Expressed in roots.

It is found in the cytoplasm. It carries out the reaction O-phospho-L-seryl-[protein] + H2O = L-seryl-[protein] + phosphate. The catalysed reaction is O-phospho-L-threonyl-[protein] + H2O = L-threonyl-[protein] + phosphate. In terms of biological role, catalytic subunit of protein phosphatase 6 (PP6). Dephosphorylates phosphorylated phytochromes, with a preference toward Pfr forms. Plays a major role in the photoperiodic control of flowering time in long days by modulating phytochrome signals in flowering time control. Involved in the regulation of polar auxin transport in roots. Dephosphorylates directly the auxin efflux carriers PIN1 and PIN2, thus promoting their proper polar localization in root cell plasma membrane. Acts antagonistically with the protein kinase PID to regulate the reversible phosphorylation of PIN and polar targeting, subsequently impacting polar auxin transport and plant development. Involved in the regulation of abscisic acid (ABA) signaling during seed germination and postgermination seedling growth. Functions as a negative regulator of ABA signaling through direct dephosphorylation and destabilization of ABI5. Acts antagonistically with the protein kinase SRK2E/SNRK2.6 to regulate ABI5 phosphorylation and ABA responses. Involved in the regulation of phosphorylation status in hypocotyl phototropism. Involved in the negative regulation of photomorphogenesis by controlling the stability and transcriptional activity of PIF3 and PIF4 proteins in the dark, via the regulation of their phosphorylation status. This Arabidopsis thaliana (Mouse-ear cress) protein is Phytochrome-associated serine/threonine-protein phosphatase 1.